The following is a 341-amino-acid chain: 5-formaminoimidazole-4-carboxamide-1-(beta)-D-ribofuranosyl 5'-monophosphate synthetase (341 aa).

5-amino-1-(5-phospho-beta-D-ribosyl)imidazole-4-carboxamide-binding residues include His-27 and Ser-92. The region spanning 113-328 (RELLRWEADQ…MGERIAHEIK (216 aa)) is the ATP-grasp domain. ATP-binding positions include 143–195 (AEEV…VPAY) and Glu-217. Asn-237 is a binding site for 5-amino-1-(5-phospho-beta-D-ribosyl)imidazole-4-carboxamide. Glu-276 and Glu-289 together coordinate Mg(2+).

The protein belongs to the phosphohexose mutase family. Mg(2+) is required as a cofactor. It depends on Mn(2+) as a cofactor.

The catalysed reaction is 5-amino-1-(5-phospho-beta-D-ribosyl)imidazole-4-carboxamide + formate + ATP = 5-formamido-1-(5-phospho-D-ribosyl)imidazole-4-carboxamide + ADP + phosphate. It participates in purine metabolism; IMP biosynthesis via de novo pathway; 5-formamido-1-(5-phospho-D-ribosyl)imidazole-4-carboxamide from 5-amino-1-(5-phospho-D-ribosyl)imidazole-4-carboxamide (formate route): step 1/1. In terms of biological role, catalyzes the ATP- and formate-dependent formylation of 5-aminoimidazole-4-carboxamide-1-beta-d-ribofuranosyl 5'-monophosphate (AICAR) to 5-formaminoimidazole-4-carboxamide-1-beta-d-ribofuranosyl 5'-monophosphate (FAICAR) in the absence of folates. This chain is 5-formaminoimidazole-4-carboxamide-1-(beta)-D-ribofuranosyl 5'-monophosphate synthetase, found in Pyrobaculum aerophilum (strain ATCC 51768 / DSM 7523 / JCM 9630 / CIP 104966 / NBRC 100827 / IM2).